The sequence spans 217 residues: Ranaspumin (217 aa).

Intrachain disulfides connect Cys-18-Cys-67, Cys-38-Cys-114, Cys-125-Cys-168, and Cys-146-Cys-207.

Monomer. In terms of tissue distribution, exclusively expressed in females in the early oviduct, the glandular part of the oviduct (pars convoluta dilata) and in the cloaca.

Its subcellular location is the secreted. Its function is as follows. Acts as a surfactant. Is the major protein constituent (45%) of foam nests. Has no antimicrobial activity, no larvicidal activity, and is not toxic to mice. The protein is Ranaspumin of Leptodactylus vastus (Northeastern pepper frog).